The chain runs to 532 residues: Di/tripeptide-binding protein 2 (532 aa).

A signal peptide spans 1–24 (MRPRSALRYSLLLLAFAASAAIQA).

The protein belongs to the bacterial solute-binding protein 5 family. In terms of assembly, the complex is composed of two ATP-binding proteins (DppD and DppF), two transmembrane proteins (DppB and DppC) and a solute-binding protein (DppA2). Five orthologous SBPs (DppA1-A5) are present in P.aeruginosa, which increases the substrate specificity of the DppBCDF transporter.

In terms of biological role, part of the ABC transporter DppABCDF involved in the uptake of various di/tripeptides. Shows high flexibility on substrate recognition. Efficiently uses tripeptides. This Pseudomonas aeruginosa (strain UCBPP-PA14) protein is Di/tripeptide-binding protein 2.